The following is a 245-amino-acid chain: Probable inactive carboxylesterase Os04g0669700 (245 aa).

Residues Ser-115 and His-201 each act as charge relay system in the active site.

The protein belongs to the AB hydrolase superfamily. AB hydrolase 2 family.

The protein is Probable inactive carboxylesterase Os04g0669700 of Oryza sativa subsp. japonica (Rice).